The chain runs to 220 residues: Iron-sulfur flavoprotein AF_1436 (220 aa).

[4Fe-4S] cluster contacts are provided by Cys47, Cys50, Cys53, and Cys59.

The protein belongs to the SsuE family. Isf subfamily. In terms of assembly, homodimer. FMN serves as cofactor. [4Fe-4S] cluster is required as a cofactor.

Redox-active protein probably involved in electron transport. This Archaeoglobus fulgidus (strain ATCC 49558 / DSM 4304 / JCM 9628 / NBRC 100126 / VC-16) protein is Iron-sulfur flavoprotein AF_1436.